The sequence spans 302 residues: Heme A synthase (302 aa).

At 1 to 6 (MNKALK) the chain is on the cytoplasmic side. Residues 7-27 (GLGIITTIAMLFVLIGGALVT) traverse the membrane as a helical segment. Residues 28–61 (KTGSGMGCGRSWPLCNGSIFPALTLESIIEWSHR) are Extracellular-facing. A disulfide bridge connects residues Cys35 and Cys42. Glu57 is an active-site residue. A heme o-binding site is contributed by His60. The helical transmembrane segment at 62-82 (FVSGTSGVLVLALAIWTWKKI) threads the bilayer. Residues 83–91 (GHIRETKFL) are Cytoplasmic-facing. The helical transmembrane segment at 92 to 112 (AVMSVVFLILQALLGAAAVVF) threads the bilayer. Residues 113 to 120 (GSSALIMA) lie on the Extracellular side of the membrane. Residues 121–141 (LHFGISLISFASVLLLTLLVF) traverse the membrane as a helical segment. His122 contacts heme o. Over 142 to 158 (EADSKQKSESFYIGKTM) the chain is Cytoplasmic. Residues 159 to 179 (QFHMIGIIIYTYVVVYTGAYV) traverse the membrane as a helical segment. Residues 180–208 (RHTSSSLACLDFPMCSTENGWLPGKFHEW) are Extracellular-facing. A disulfide bond links Cys188 and Cys194. A helical transmembrane segment spans residues 209-229 (VQMGHRAAALLLFAWIIAAAV). His213 lines the heme b pocket. The Cytoplasmic segment spans residues 230–242 (HAARQYKNQKRIY). A helical transmembrane segment spans residues 243-263 (WGWMISLILIILQAASGIAVV). Residues 264 to 272 (YSRLDLGFA) are Extracellular-facing. A helical membrane pass occupies residues 273–293 (LAHAFFISCLFGILCYFLLLV). Heme b is bound at residue His275. The Cytoplasmic segment spans residues 294 to 302 (ARYRRQVQK).

This sequence belongs to the COX15/CtaA family. Type 1 subfamily. In terms of assembly, interacts with CtaB. Heme b is required as a cofactor.

The protein localises to the cell membrane. The enzyme catalyses Fe(II)-heme o + 2 A + H2O = Fe(II)-heme a + 2 AH2. It participates in porphyrin-containing compound metabolism; heme A biosynthesis; heme A from heme O: step 1/1. Its function is as follows. Catalyzes the conversion of heme O to heme A by two successive hydroxylations of the methyl group at C8. The first hydroxylation forms heme I, the second hydroxylation results in an unstable dihydroxymethyl group, which spontaneously dehydrates, resulting in the formyl group of heme A. This Bacillus licheniformis (strain ATCC 14580 / DSM 13 / JCM 2505 / CCUG 7422 / NBRC 12200 / NCIMB 9375 / NCTC 10341 / NRRL NRS-1264 / Gibson 46) protein is Heme A synthase.